A 218-amino-acid polypeptide reads, in one-letter code: Peptide methionine sulfoxide reductase MsrA (218 aa).

Cys57 is a catalytic residue.

Belongs to the MsrA Met sulfoxide reductase family.

The enzyme catalyses L-methionyl-[protein] + [thioredoxin]-disulfide + H2O = L-methionyl-(S)-S-oxide-[protein] + [thioredoxin]-dithiol. It carries out the reaction [thioredoxin]-disulfide + L-methionine + H2O = L-methionine (S)-S-oxide + [thioredoxin]-dithiol. Functionally, has an important function as a repair enzyme for proteins that have been inactivated by oxidation. Catalyzes the reversible oxidation-reduction of methionine sulfoxide in proteins to methionine. In Brucella melitensis biotype 2 (strain ATCC 23457), this protein is Peptide methionine sulfoxide reductase MsrA.